A 29-amino-acid polypeptide reads, in one-letter code: Potassium channel toxin alpha-KTx 3.15 (29 aa).

A disulfide bridge links C8 with C27.

The protein belongs to the short scorpion toxin superfamily. Potassium channel inhibitor family. Alpha-KTx 03 subfamily. Expressed by the venom gland.

It is found in the secreted. Its function is as follows. May play a role in blocking voltage-gated potassium channels Kv1.1/KCNA1, Kv1.3/KCNA3 and Kv1.6/KCNA6. The sequence is that of Potassium channel toxin alpha-KTx 3.15 from Mesobuthus gibbosus (Mediterranean checkered scorpion).